A 410-amino-acid polypeptide reads, in one-letter code: Structural protein ORF142 (410 aa).

Disordered regions lie at residues 1–24 (MNQN…HVDT) and 156–197 (PTST…VNIS). Residues 161–188 (DDNDNENRSDDDDDDDDYRNDREEVEDS) are compositionally biased toward acidic residues.

The protein localises to the virion. This is Structural protein ORF142 from Trichoplusia ni ascovirus 2c (TnAV-2c).